We begin with the raw amino-acid sequence, 544 residues long: MRLNSVALLSLVATALAAKAPFKIDFEVRRGESKDDLSPEDDSNPRFVKRDGSLDMTLTNKQTFYMATLKIGSNEDENRVLEDTGSSDLWVMSHDLKCVSAPISKRNERSFGHGTGVKLNERELMQKRKNLYQPSRTIETDEEKEASEKIHNKLFGFGSIYSTVYITEGPGAYSTFSPLVGTEGGSGGSGGSNTCRSYGSFNTENSDTFKKNNTNDFEIQYADDTSAIGIWGYDDVTISNVTVKDLSFAIANETSSDVGVLGIGLPGLEVTTQLRYTYQNLPLKLKADGIIAKSLYSLYLNTADAKAGSILFGAIDHAKYQGDLVTVKMMRTYSQISYPVRIQVPVLKIDVESSSGSTTNILSGTTGVVLDTGSTLSYVFSDTLQSLGKALNGQYSNSVGAYVVNCNLADSSRTVDIEFGGNKTIKVPISDLVLQASKSTCILGVMQQSSSSSYMLFGDNILRSAYIVYDLDDYEVSLAQVSYTNKESIEVIGASGITNSSGSGTTSSSGTSTSTSTRHSAGSIISNPVYGLLLSLLISYYVLV.

Positions 1-17 (MRLNSVALLSLVATALA) are cleaved as a signal peptide. The interval 31–50 (GESKDDLSPEDDSNPRFVKR) is disordered. In terms of domain architecture, Peptidase A1 spans 65–479 (YMATLKIGSN…DLDDYEVSLA (415 aa)). A pepstatin A-binding site is contributed by 83–85 (DTG). A disulfide bridge connects residues cysteine 98 and cysteine 195. Threonine 167 is an active-site residue. N-linked (GlcNAc...) asparagine glycans are attached at residues asparagine 212, asparagine 240, and asparagine 252. Residue aspartate 371 is part of the active site. Residue 371–375 (DTGST) coordinates pepstatin A. An intrachain disulfide couples cysteine 406 to cysteine 441. 2 N-linked (GlcNAc...) asparagine glycosylation sites follow: asparagine 422 and asparagine 499. The interval 500–520 (SSGSGTTSSSGTSTSTSTRHS) is disordered.

It belongs to the peptidase A1 family. As to quaternary structure, monomer. Post-translationally, the GPI-anchor is attached to the protein in the endoplasmic reticulum and serves to target the protein to the cell surface. There, the glucosamine-inositol phospholipid moiety is cleaved off and the GPI-modified mannoprotein is covalently attached via its lipidless GPI glycan remnant to the 1,6-beta-glucan of the outer cell wall layer.

It is found in the cell membrane. The protein resides in the secreted. It localises to the cell wall. It catalyses the reaction Preferential cleavage at the carboxyl of hydrophobic amino acids, but fails to cleave 15-Leu-|-Tyr-16, 16-Tyr-|-Leu-17 and 24-Phe-|-Phe-25 of insulin B chain. Activates trypsinogen, and degrades keratin.. In terms of biological role, secreted aspartic peptidases (SAPs) are a group of ten acidic hydrolases considered as key virulence factors. These enzymes supply the fungus with nutrient amino acids as well as are able to degrade the selected host's proteins involved in the immune defense. Moreover, acts toward human hemoglobin though limited proteolysis to generate a variety of antimicrobial hemocidins, enabling to compete with the other microorganisms of the same physiological niche using the microbicidal peptides generated from the host protein. Plays a key role in defense against host by cleaving histatin-5 (Hst 5), a peptide from human saliva that carries out fungicidal activity. The cleavage rate decreases in an order of SAP2 &gt; SAP9 &gt; SAP3 &gt; SAP7 &gt; SAP4 &gt; SAP1 &gt; SAP8. The first cleavage occurs between residues 'Lys-17' and 'His-18' of Hst 5, giving DSHAKRHHGYKRKFHEK and HHSHRGY peptides. Simultaneously, the DSHAKRHHGYKRK peptide is also formed. Further fragmentation by SAP9 results in FHEK product. This chain is Secreted aspartic protease 9, found in Candida albicans (Yeast).